Consider the following 390-residue polypeptide: Tuftelin (390 aa).

2 coiled-coil regions span residues 88 to 126 (DKMI…KLDR) and 162 to 351 (DTHI…IEKQ). The residue at position 171 (S171) is a Phosphoserine.

Belongs to the tuftelin family. As to quaternary structure, interacts with TFIP11. Present in the extracellular enamel and is mainly associated with the crystal component.

The protein resides in the secreted. Functionally, involved in the structural organization of the epidermis. Involved in the mineralization and structural organization of enamel. The protein is Tuftelin (TUFT1) of Bos taurus (Bovine).